We begin with the raw amino-acid sequence, 130 residues long: D-ribose pyranase (130 aa).

Catalysis depends on His-20, which acts as the Proton donor. Substrate is bound by residues Asp-28, His-97, and 119-121 (YAN).

Belongs to the RbsD / FucU family. RbsD subfamily. As to quaternary structure, homodecamer.

The protein localises to the cytoplasm. It catalyses the reaction beta-D-ribopyranose = beta-D-ribofuranose. It participates in carbohydrate metabolism; D-ribose degradation; D-ribose 5-phosphate from beta-D-ribopyranose: step 1/2. In terms of biological role, catalyzes the interconversion of beta-pyran and beta-furan forms of D-ribose. In Heliobacterium modesticaldum (strain ATCC 51547 / Ice1), this protein is D-ribose pyranase.